We begin with the raw amino-acid sequence, 86 residues long: Large ribosomal subunit protein bL31m (86 aa).

A mitochondrion-targeting transit peptide spans 1 to 18; the sequence is MKCSLRLFEKAGRLSVRS.

This sequence belongs to the bacterial ribosomal protein bL31 family. Highly divergent. In terms of assembly, component of the mitochondrial large ribosomal subunit (mt-LSU). Mature yeast 74S mitochondrial ribosomes consist of a small (37S) and a large (54S) subunit. The 37S small subunit contains a 15S ribosomal RNA (15S mt-rRNA) and at least 32 different proteins. The 54S large subunit contains a 21S rRNA (21S mt-rRNA) and at least 45 different proteins.

It localises to the mitochondrion. Its function is as follows. Component of the mitochondrial ribosome (mitoribosome), a dedicated translation machinery responsible for the synthesis of mitochondrial genome-encoded proteins, including at least some of the essential transmembrane subunits of the mitochondrial respiratory chain. The mitoribosomes are attached to the mitochondrial inner membrane and translation products are cotranslationally integrated into the membrane. The protein is Large ribosomal subunit protein bL31m (tam9) of Schizosaccharomyces pombe (strain 972 / ATCC 24843) (Fission yeast).